The primary structure comprises 340 residues: Anthranilate phosphoribosyltransferase (340 aa).

5-phospho-alpha-D-ribose 1-diphosphate contacts are provided by residues Gly-84, 87 to 88 (GD), Thr-92, 94 to 97 (NIST), 112 to 120 (KHGSRSVSS), and Ser-124. Gly-84 contacts anthranilate. Ser-96 is a binding site for Mg(2+). Position 170 (Arg-170) interacts with anthranilate. Mg(2+) contacts are provided by Asp-228 and Glu-229.

The protein belongs to the anthranilate phosphoribosyltransferase family. Homodimer. Requires Mg(2+) as cofactor.

The catalysed reaction is N-(5-phospho-beta-D-ribosyl)anthranilate + diphosphate = 5-phospho-alpha-D-ribose 1-diphosphate + anthranilate. It functions in the pathway amino-acid biosynthesis; L-tryptophan biosynthesis; L-tryptophan from chorismate: step 2/5. Catalyzes the transfer of the phosphoribosyl group of 5-phosphorylribose-1-pyrophosphate (PRPP) to anthranilate to yield N-(5'-phosphoribosyl)-anthranilate (PRA). This is Anthranilate phosphoribosyltransferase from Psychromonas ingrahamii (strain DSM 17664 / CCUG 51855 / 37).